The primary structure comprises 151 residues: Acidic phospholipase A2 6 (151 aa).

Positions 1–27 (MYPAHLLVLLAVCVSLLGAASIPARPL) are cleaved as a signal peptide. 7 disulfides stabilise this stretch: C38–C104, C54–C151, C56–C72, C71–C132, C78–C125, C88–C118, and C111–C123. 3 residues coordinate Ca(2+): Y55, G57, and G59. Residue H75 is part of the active site. Residue D76 participates in Ca(2+) binding. Residue D126 is part of the active site.

This sequence belongs to the phospholipase A2 family. Group I subfamily. D49 sub-subfamily. Ca(2+) serves as cofactor. As to expression, expressed by the venom gland.

It is found in the secreted. It catalyses the reaction a 1,2-diacyl-sn-glycero-3-phosphocholine + H2O = a 1-acyl-sn-glycero-3-phosphocholine + a fatty acid + H(+). In terms of biological role, PLA2 catalyzes the calcium-dependent hydrolysis of the 2-acyl groups in 3-sn-phosphoglycerides. The polypeptide is Acidic phospholipase A2 6 (Tropidechis carinatus (Australian rough-scaled snake)).